A 304-amino-acid polypeptide reads, in one-letter code: Homoserine kinase (304 aa).

90–100 (PLARGLGSSAS) serves as a coordination point for ATP.

Belongs to the GHMP kinase family. Homoserine kinase subfamily.

It localises to the cytoplasm. It catalyses the reaction L-homoserine + ATP = O-phospho-L-homoserine + ADP + H(+). It functions in the pathway amino-acid biosynthesis; L-threonine biosynthesis; L-threonine from L-aspartate: step 4/5. In terms of biological role, catalyzes the ATP-dependent phosphorylation of L-homoserine to L-homoserine phosphate. The chain is Homoserine kinase from Staphylococcus aureus (strain NCTC 8325 / PS 47).